Consider the following 340-residue polypeptide: uncharacterized protein (340 aa).

The first 23 residues, 1–23 (MQKKVLSLVLVLAVLESIVPVSA), serve as a signal peptide directing secretion.

This is an uncharacterized protein from Archaeoglobus fulgidus (strain ATCC 49558 / DSM 4304 / JCM 9628 / NBRC 100126 / VC-16).